The sequence spans 135 residues: Transcription antitermination protein NusB (135 aa).

It belongs to the NusB family.

In terms of biological role, involved in transcription antitermination. Required for transcription of ribosomal RNA (rRNA) genes. Binds specifically to the boxA antiterminator sequence of the ribosomal RNA (rrn) operons. This Clostridium perfringens (strain SM101 / Type A) protein is Transcription antitermination protein NusB.